The sequence spans 503 residues: MVLEMLNPIHYNITSIVPEAMPAATMPVLLLTGLFLLVWNYEGTSSIPGPGYCMGIGPLISHGRFLWMGIGSACNYYNRVYGEFMRVWISGEETLIISKSSSMFHIMKHNHYSSRFGSKLGLQCIGMHEKGIIFNNNPELWKTTRPFFMKALSGPGLVRMVTVCAESLKTHLDRLEEVTNESGYVDVLTLLRRVMLDTSNTLFLRIPLDESAIVVKIQGYFDAWQALLIKPDIFFKISWLYKKYEKSVKDLKDAIEVLIAEKRRRISTEEKLEECMDFATELILAEKRGDLTRENVNQCILEMLIAAPDTMSVSLFFMLFLIAKHPNVEEAIIKEIQTVIGERDIKIDDIQKLKVMENFIYESMRYQPVVDLVMRKALEDDVIDGYPVKKGTNIILNIGRMHRLEFFPKPNEFTLENFAKNVPYRYFQPFGFGPRGCAGKYIAMVMMKAILVTLLRRFHVKTLQGQCVESIQKIHDLSLHPDETKNMLEMIFTPRNSDRCLEH.

Transmembrane regions (helical) follow at residues 19-39 (EAMPAATMPVLLLTGLFLLVW) and 303-323 (MLIAAPDTMSVSLFFMLFLIA). Substrate is bound by residues Asp309 and Met374. Heme is bound at residue Cys437.

Belongs to the cytochrome P450 family. It depends on heme as a cofactor. Post-translationally, phosphorylated in vitro by PKA and PKG/PRKG1. These phosphorylations inhibit the catalytic activity as measured by estrone synthesis from androstenedione (36% decrease for PKA and 30% for PKG/PRKG1). Widely expressed, including in adult and fetal brain, placenta, skin fibroblasts, adipose tissue and gonads.

Its subcellular location is the endoplasmic reticulum membrane. The protein resides in the microsome membrane. The catalysed reaction is testosterone + 3 reduced [NADPH--hemoprotein reductase] + 3 O2 = 17beta-estradiol + formate + 3 oxidized [NADPH--hemoprotein reductase] + 4 H2O + 4 H(+). It carries out the reaction androst-4-ene-3,17-dione + 3 reduced [NADPH--hemoprotein reductase] + 3 O2 = estrone + formate + 3 oxidized [NADPH--hemoprotein reductase] + 4 H2O + 4 H(+). The enzyme catalyses androst-4-ene-3,17-dione + reduced [NADPH--hemoprotein reductase] + O2 = 19-hydroxyandrost-4-ene-3,17-dione + oxidized [NADPH--hemoprotein reductase] + H2O + H(+). It catalyses the reaction 19-hydroxyandrost-4-ene-3,17-dione + reduced [NADPH--hemoprotein reductase] + O2 = 19-oxo-androst-4-ene-3,17-dione + oxidized [NADPH--hemoprotein reductase] + 2 H2O + H(+). The catalysed reaction is 19-oxo-androst-4-ene-3,17-dione + reduced [NADPH--hemoprotein reductase] + O2 = estrone + formate + oxidized [NADPH--hemoprotein reductase] + H2O + 2 H(+). It carries out the reaction estrone + reduced [NADPH--hemoprotein reductase] + O2 = 2-hydroxyestrone + oxidized [NADPH--hemoprotein reductase] + H2O + H(+). The enzyme catalyses 17beta-hydroxy-5alpha-androstan-3-one + reduced [NADPH--hemoprotein reductase] + O2 = 17beta,19-dihydroxy-3-oxo-5alpha-androstanone + oxidized [NADPH--hemoprotein reductase] + H2O + H(+). It catalyses the reaction 17beta,19-dihydroxy-3-oxo-5alpha-androstanone + reduced [NADPH--hemoprotein reductase] + O2 = 17beta-hydroxy-3,19-dioxo-5alpha-androstanone + oxidized [NADPH--hemoprotein reductase] + 2 H2O + H(+). The catalysed reaction is 17beta-hydroxy-3,19-dioxo-5alpha-androstanone + reduced [NADPH--hemoprotein reductase] + O2 = 17beta-hydroxy-3-oxo-19-nor-5alpha-androst-1-ene + formate + oxidized [NADPH--hemoprotein reductase] + H2O + 2 H(+). It participates in steroid hormone biosynthesis. Its function is as follows. A cytochrome P450 monooxygenase that catalyzes the conversion of C19 androgens, androst-4-ene-3,17-dione (androstenedione) and testosterone to the C18 estrogens, estrone and estradiol, respectively. Catalyzes three successive oxidations of C19 androgens: two conventional oxidations at C19 yielding 19-hydroxy and 19-oxo/19-aldehyde derivatives, followed by a third oxidative aromatization step that involves C1-beta hydrogen abstraction combined with cleavage of the C10-C19 bond to yield a phenolic A ring and formic acid. Alternatively, the third oxidative reaction yields a 19-norsteroid and formic acid. Converts dihydrotestosterone to delta1,10-dehydro 19-nordihydrotestosterone and may play a role in homeostasis of this potent androgen. Also displays 2-hydroxylase activity toward estrone. Mechanistically, uses molecular oxygen inserting one oxygen atom into a substrate, and reducing the second into a water molecule, with two electrons provided by NADPH via cytochrome P450 reductase (CPR; NADPH-ferrihemoprotein reductase). This Homo sapiens (Human) protein is Aromatase.